We begin with the raw amino-acid sequence, 162 residues long: Superoxide dismutase [Cu-Zn] (162 aa).

The N-terminal stretch at 1–20 is a signal peptide; it reads MNKSGIILIGTILFSSMAIA. Cu cation-binding residues include histidine 66, histidine 68, and histidine 83. The cysteines at positions 73 and 158 are disulfide-linked. Zn(2+)-binding residues include histidine 83, histidine 92, histidine 100, and aspartate 103. Histidine 137 is a binding site for Cu cation.

This sequence belongs to the Cu-Zn superoxide dismutase family. Homodimer. The cofactor is Cu cation. It depends on Zn(2+) as a cofactor.

Its subcellular location is the periplasm. It carries out the reaction 2 superoxide + 2 H(+) = H2O2 + O2. Destroys radicals which are normally produced within the cells and which are toxic to biological systems. This chain is Superoxide dismutase [Cu-Zn] (sodC), found in Legionella pneumophila.